A 117-amino-acid polypeptide reads, in one-letter code: uncharacterized protein (117 aa).

This is an uncharacterized protein from Mus musculus (Mouse).